The chain runs to 272 residues: MTGSIWAGSIWAIVPAAGRGTRFGGPLPKQYLQAGGQPLMAYTLMALAAHPALAGIVVAIAPDDADWPGWTAVQSKPVLTCLGGATRAASVLAGVLALPESVRADDFVLVHDAARPNLALADLDRLLEIGRGDPVGAILAAPVRDTLKRAGDDGGIDGTEPRERLWRALTPQLFRRHQLIRGLTEASAAGVDVTDEAMAMERMGLRPLLVEGAEDNFKVTTPADLARFEFELARRGIAVDADALEAPAVNAQSNARNVATQLATVSYGNDAT.

This sequence belongs to the IspD/TarI cytidylyltransferase family. IspD subfamily.

It carries out the reaction 2-C-methyl-D-erythritol 4-phosphate + CTP + H(+) = 4-CDP-2-C-methyl-D-erythritol + diphosphate. It participates in isoprenoid biosynthesis; isopentenyl diphosphate biosynthesis via DXP pathway; isopentenyl diphosphate from 1-deoxy-D-xylulose 5-phosphate: step 2/6. Its function is as follows. Catalyzes the formation of 4-diphosphocytidyl-2-C-methyl-D-erythritol from CTP and 2-C-methyl-D-erythritol 4-phosphate (MEP). The polypeptide is 2-C-methyl-D-erythritol 4-phosphate cytidylyltransferase (Xanthomonas oryzae pv. oryzae (strain PXO99A)).